Here is a 37-residue protein sequence, read N- to C-terminus: Esculentin-2JDb (37 aa).

Cysteine 31 and cysteine 37 form a disulfide bridge.

As to expression, expressed by the skin glands.

It localises to the secreted. Its function is as follows. Has antibacterial activity against E.coli and S.aureus strains. This chain is Esculentin-2JDb, found in Odorrana jingdongensis (Jingdong frog).